Here is a 151-residue protein sequence, read N- to C-terminus: Deoxyuridine 5'-triphosphate nucleotidohydrolase (151 aa).

Residues 70–72 (RSG), N83, 87–89 (LID), and M97 contribute to the substrate site.

This sequence belongs to the dUTPase family. As to quaternary structure, homotrimer. Mg(2+) is required as a cofactor.

The enzyme catalyses dUTP + H2O = dUMP + diphosphate + H(+). Its pathway is pyrimidine metabolism; dUMP biosynthesis; dUMP from dCTP (dUTP route): step 2/2. In terms of biological role, this enzyme is involved in nucleotide metabolism: it produces dUMP, the immediate precursor of thymidine nucleotides and it decreases the intracellular concentration of dUTP so that uracil cannot be incorporated into DNA. In Escherichia coli O7:K1 (strain IAI39 / ExPEC), this protein is Deoxyuridine 5'-triphosphate nucleotidohydrolase.